Here is an 817-residue protein sequence, read N- to C-terminus: Ribonuclease R 1 (817 aa).

The region spanning 259-584 is the RNB domain; it reads RVDYRNEITF…DLLVHRLIRE (326 aa). Residues 637-717 enclose the S1 motif domain; that stretch reads GEEYEGIIAS…MTGEIDFEYL (81 aa). A disordered region spans residues 728 to 817; that stretch reads AKAKKKPDHK…DGRKKPHKRG (90 aa). Residues 729–742 are compositionally biased toward basic residues; it reads KAKKKPDHKGRKKS. 2 stretches are compositionally biased toward basic and acidic residues: residues 767–777 and 795–810; these read RRADEKFEFDK and KFTDKKDNGKKFTDGR.

Belongs to the RNR ribonuclease family. RNase R subfamily.

It localises to the cytoplasm. It carries out the reaction Exonucleolytic cleavage in the 3'- to 5'-direction to yield nucleoside 5'-phosphates.. Functionally, 3'-5' exoribonuclease that releases 5'-nucleoside monophosphates and is involved in maturation of structured RNAs. The protein is Ribonuclease R 1 (rnr1) of Lactococcus lactis subsp. lactis (strain IL1403) (Streptococcus lactis).